Reading from the N-terminus, the 120-residue chain is Large ribosomal subunit protein bL19c (120 aa).

This sequence belongs to the bacterial ribosomal protein bL19 family.

It localises to the plastid. The protein localises to the chloroplast. In Phaeodactylum tricornutum (strain CCAP 1055/1), this protein is Large ribosomal subunit protein bL19c.